The following is a 381-amino-acid chain: Gustatory and pheromone receptor 39a, isoform D (381 aa).

The Cytoplasmic portion of the chain corresponds to 1–43; it reads MKRNAFEELRVQLRTLKWLGVLRFTIDFNKCLVRENASEERSA. Residues 44–64 traverse the membrane as a helical segment; it reads WLYLIGVVGITCSLIVYSTYF. The Extracellular segment spans residues 65-78; the sequence is PSHFIMGKHNTTGN. N-linked (GlcNAc...) asparagine glycosylation occurs at asparagine 74. A helical membrane pass occupies residues 79–101; sequence CYALINIRSCSIVTMLIYTQLYI. Topologically, residues 102–128 are cytoplasmic; it reads QRFRFVALLQSILRFNQISGSHREEGR. Residues 129 to 149 form a helical membrane-spanning segment; that stretch reads FAFYYYTHLSLLIICMLNYAY. The Extracellular segment spans residues 150–172; that stretch reads GYWTAGVRLTTIPIYLLQYGFSY. A helical transmembrane segment spans residues 173–193; sequence LFLGQVVVLFACIQQILLSIL. Over 194–234 the chain is Cytoplasmic; sequence KYYNQVVLKNIKSSKESREFYYNFCKYNQVIWLSYTEINHC. A helical membrane pass occupies residues 235–255; that stretch reads FGLLLLLVTGLILLITPSGPF. Topologically, residues 256–273 are extracellular; sequence YLVSTIFEGRFRQNWQFS. A helical transmembrane segment spans residues 274 to 294; it reads LMSFTAILWSLPWIVLLVLAM. Residues 295–350 are Cytoplasmic-facing; sequence GRNDVQKEANKTAKMLTKVPRTGTGLDRMIEKFLLKNLRQKPILTAYGFFALDKST. Residues 351 to 371 traverse the membrane as a helical segment; it reads LFKLFTAIFTYMVILVQFKEM. Over 372-381 the chain is Extracellular; the sequence is ENSTKSINKF. Residue asparagine 373 is glycosylated (N-linked (GlcNAc...) asparagine).

The protein belongs to the insect chemoreceptor superfamily. Gustatory receptor (GR) family. Gr21a subfamily. Expressed in the adult labellar chemosensory neurons and adult thorax and abdomen.

It localises to the cell membrane. Functionally, gustatory receptor which mediates acceptance or avoidance behavior, depending on its substrates. Plays a role in sustaining courtship behavior in males, possibly through the reception of a stimulating arrestant pheromone. This chain is Gustatory and pheromone receptor 39a, isoform D (Gr39a), found in Drosophila melanogaster (Fruit fly).